A 226-amino-acid polypeptide reads, in one-letter code: Large ribosomal subunit protein uL3 (226 aa).

Gln160 is modified (N5-methylglutamine).

It belongs to the universal ribosomal protein uL3 family. In terms of assembly, part of the 50S ribosomal subunit. Forms a cluster with proteins L14 and L19. Methylated by PrmB.

Its function is as follows. One of the primary rRNA binding proteins, it binds directly near the 3'-end of the 23S rRNA, where it nucleates assembly of the 50S subunit. The protein is Large ribosomal subunit protein uL3 of Leptothrix cholodnii (strain ATCC 51168 / LMG 8142 / SP-6) (Leptothrix discophora (strain SP-6)).